A 404-amino-acid polypeptide reads, in one-letter code: Imidazolonepropionase (404 aa).

The Fe(3+) site is built by His73 and His75. His73 and His75 together coordinate Zn(2+). 4-imidazolone-5-propanoate is bound by residues Arg82, Tyr145, and His178. Tyr145 contacts N-formimidoyl-L-glutamate. His243 lines the Fe(3+) pocket. His243 contacts Zn(2+). Position 246 (Gln246) interacts with 4-imidazolone-5-propanoate. Position 318 (Asp318) interacts with Fe(3+). Asp318 provides a ligand contact to Zn(2+). The N-formimidoyl-L-glutamate site is built by Asn320 and Gly322. Ser323 is a 4-imidazolone-5-propanoate binding site.

This sequence belongs to the metallo-dependent hydrolases superfamily. HutI family. Zn(2+) is required as a cofactor. Requires Fe(3+) as cofactor.

It localises to the cytoplasm. It catalyses the reaction 4-imidazolone-5-propanoate + H2O = N-formimidoyl-L-glutamate. Its pathway is amino-acid degradation; L-histidine degradation into L-glutamate; N-formimidoyl-L-glutamate from L-histidine: step 3/3. In terms of biological role, catalyzes the hydrolytic cleavage of the carbon-nitrogen bond in imidazolone-5-propanoate to yield N-formimidoyl-L-glutamate. It is the third step in the universal histidine degradation pathway. In Bradyrhizobium diazoefficiens (strain JCM 10833 / BCRC 13528 / IAM 13628 / NBRC 14792 / USDA 110), this protein is Imidazolonepropionase.